Reading from the N-terminus, the 57-residue chain is Sec-independent protein translocase protein TatA (57 aa).

Residues 1–21 traverse the membrane as a helical segment; the sequence is MGISVWQLLIILLIVVMLFGT. The segment at 37 to 57 is disordered; the sequence is GFRKSVSDGETTTQAEASSRS. Over residues 44 to 57 the composition is skewed to polar residues; that stretch reads DGETTTQAEASSRS.

The protein belongs to the TatA/E family. The Tat system comprises two distinct complexes: a TatABC complex, containing multiple copies of TatA, TatB and TatC subunits, and a separate TatA complex, containing only TatA subunits. Substrates initially bind to the TatABC complex, which probably triggers association of the separate TatA complex to form the active translocon.

It localises to the cell inner membrane. Part of the twin-arginine translocation (Tat) system that transports large folded proteins containing a characteristic twin-arginine motif in their signal peptide across membranes. TatA could form the protein-conducting channel of the Tat system. This Stutzerimonas stutzeri (Pseudomonas stutzeri) protein is Sec-independent protein translocase protein TatA.